The chain runs to 77 residues: MATGIPASELRELSNEELTTRLKESKEELFNLRFQMATGQLTNNRRLSVVKKDIARIYTVLRERELGLSTNPGGDAA.

The protein belongs to the universal ribosomal protein uL29 family.

This chain is Large ribosomal subunit protein uL29, found in Corynebacterium urealyticum (strain ATCC 43042 / DSM 7109).